Consider the following 346-residue polypeptide: Uroporphyrinogen decarboxylase (346 aa).

Substrate is bound by residues 23 to 27 (RQAGR), D72, Y155, S209, and H322.

This sequence belongs to the uroporphyrinogen decarboxylase family. Homodimer.

It localises to the cytoplasm. The enzyme catalyses uroporphyrinogen III + 4 H(+) = coproporphyrinogen III + 4 CO2. The protein operates within porphyrin-containing compound metabolism; protoporphyrin-IX biosynthesis; coproporphyrinogen-III from 5-aminolevulinate: step 4/4. Catalyzes the decarboxylation of four acetate groups of uroporphyrinogen-III to yield coproporphyrinogen-III. In Anaeromyxobacter sp. (strain Fw109-5), this protein is Uroporphyrinogen decarboxylase.